A 304-amino-acid polypeptide reads, in one-letter code: Acetyl-coenzyme A carboxylase carboxyl transferase subunit beta (304 aa).

Residues 23–292 (VWTKCDSCGQ…PNPDAPREGV (270 aa)) form the CoA carboxyltransferase N-terminal domain. Zn(2+) contacts are provided by Cys-27, Cys-30, Cys-46, and Cys-49. Residues 27–49 (CDSCGQVLYRAELERNLEVCPKC) form a C4-type zinc finger. Residues 284-304 (NPDAPREGVVVPPAPDQESEV) are disordered.

It belongs to the AccD/PCCB family. As to quaternary structure, acetyl-CoA carboxylase is a heterohexamer composed of biotin carboxyl carrier protein (AccB), biotin carboxylase (AccC) and two subunits each of ACCase subunit alpha (AccA) and ACCase subunit beta (AccD). It depends on Zn(2+) as a cofactor.

Its subcellular location is the cytoplasm. It carries out the reaction N(6)-carboxybiotinyl-L-lysyl-[protein] + acetyl-CoA = N(6)-biotinyl-L-lysyl-[protein] + malonyl-CoA. Its pathway is lipid metabolism; malonyl-CoA biosynthesis; malonyl-CoA from acetyl-CoA: step 1/1. In terms of biological role, component of the acetyl coenzyme A carboxylase (ACC) complex. Biotin carboxylase (BC) catalyzes the carboxylation of biotin on its carrier protein (BCCP) and then the CO(2) group is transferred by the transcarboxylase to acetyl-CoA to form malonyl-CoA. This Salmonella paratyphi A (strain ATCC 9150 / SARB42) protein is Acetyl-coenzyme A carboxylase carboxyl transferase subunit beta.